We begin with the raw amino-acid sequence, 221 residues long: MALPNQQTVDYPSFKLVIVGDGGTGKTTFVKRHLTGEFEKKYEPTIGVEVHPLDFFTNCGKIRFYCWDTAGQEKFGGLRDGYYIHGQCAIIMFDVTARLTYKNVPTWHRDLCRVCENIPIVLCGNKVDVKNRQVKAKQVTFHRKKNLQYYEISAKSNYNFEKPFLYLARKLAGDQNLHFVETPALAPPEVHIDIADQQKNEAELLQAAAQPLPDDDDDIFE.

The Small GTPase Ran-type domain occupies 10–174 (DYPSFKLVIV…LYLARKLAGD (165 aa)). 21–28 (DGGTGKTT) is a binding site for GTP. A switch-I region spans residues 40–48 (KKYEPTIGV). Residues G71, 125–128 (NKVD), and 153–155 (SAK) each bind GTP. The interval 71–87 (GQEKFGGLRDGYYIHGQ) is switch-II.

This sequence belongs to the small GTPase superfamily. Ran family. In terms of assembly, found in a nuclear export complex with RanGTP, exportin and pre-miRNA. Interacts with RANBP1A and RANBP1B. Interacts with TRN1. Interacts with ATX1. Interacts with KPNB1. Binds to XPO1. Interacts with MOS14. Binds to NTF2B.

The protein resides in the nucleus. Its function is as follows. GTP-binding protein involved in nucleocytoplasmic transport. Required for the import of protein into the nucleus and also for RNA export. Involved in chromatin condensation and control of cell cycle. The protein is GTP-binding nuclear protein Ran-1 (RAN1) of Arabidopsis thaliana (Mouse-ear cress).